The chain runs to 474 residues: tRNA-2-methylthio-N(6)-dimethylallyladenosine synthase (474 aa).

The MTTase N-terminal domain occupies 3–120 (KKLHIKTWGC…LPEMINHVQG (118 aa)). The [4Fe-4S] cluster site is built by Cys12, Cys49, Cys83, Cys157, Cys161, and Cys164. Positions 143 to 375 (RAEGPTAFVS…QQRISQQAME (233 aa)) constitute a Radical SAM core domain. The 64-residue stretch at 378–441 (RKMVGTVQRV…ASSLRGILLR (64 aa)) folds into the TRAM domain.

The protein belongs to the methylthiotransferase family. MiaB subfamily. In terms of assembly, monomer. Requires [4Fe-4S] cluster as cofactor.

The protein localises to the cytoplasm. The catalysed reaction is N(6)-dimethylallyladenosine(37) in tRNA + (sulfur carrier)-SH + AH2 + 2 S-adenosyl-L-methionine = 2-methylsulfanyl-N(6)-dimethylallyladenosine(37) in tRNA + (sulfur carrier)-H + 5'-deoxyadenosine + L-methionine + A + S-adenosyl-L-homocysteine + 2 H(+). Its function is as follows. Catalyzes the methylthiolation of N6-(dimethylallyl)adenosine (i(6)A), leading to the formation of 2-methylthio-N6-(dimethylallyl)adenosine (ms(2)i(6)A) at position 37 in tRNAs that read codons beginning with uridine. The protein is tRNA-2-methylthio-N(6)-dimethylallyladenosine synthase of Yersinia pseudotuberculosis serotype O:1b (strain IP 31758).